The chain runs to 327 residues: Dipeptide transport ATP-binding protein DppD (327 aa).

The region spanning 4–254 is the ABC transporter domain; sequence LNVDKLSVHF…PRHPYTQALL (251 aa). An ATP-binding site is contributed by 40–47; that stretch reads GESGSGKS.

This sequence belongs to the ABC transporter superfamily. The complex is composed of two ATP-binding proteins (DppD and DppF), two transmembrane proteins (DppB and DppC) and a solute-binding protein (DppA). MppA can replace DppA as binding protein for heme and ALA transport.

It localises to the cell inner membrane. It catalyses the reaction a dipeptide(out) + ATP + H2O = a dipeptide(in) + ADP + phosphate + H(+). Part of the ABC transporter DppABCDF involved in dipeptide transport. Responsible for energy coupling to the transport system. Its function is as follows. When a foreign outer membrane heme receptor is expressed in E.coli, DppABCDF can also transport heme and its precursor, 5-aminolevulinic acid (ALA), from the periplasm into the cytoplasm. This Escherichia coli (strain K12) protein is Dipeptide transport ATP-binding protein DppD (dppD).